We begin with the raw amino-acid sequence, 153 residues long: UPF0102 protein Pnap_0271 (153 aa).

The protein belongs to the UPF0102 family.

The protein is UPF0102 protein Pnap_0271 of Polaromonas naphthalenivorans (strain CJ2).